We begin with the raw amino-acid sequence, 302 residues long: Ribosomal protein L11 methyltransferase (302 aa).

T155, G176, D198, and N239 together coordinate S-adenosyl-L-methionine.

Belongs to the methyltransferase superfamily. PrmA family.

The protein localises to the cytoplasm. It carries out the reaction L-lysyl-[protein] + 3 S-adenosyl-L-methionine = N(6),N(6),N(6)-trimethyl-L-lysyl-[protein] + 3 S-adenosyl-L-homocysteine + 3 H(+). In terms of biological role, methylates ribosomal protein L11. The chain is Ribosomal protein L11 methyltransferase from Caldicellulosiruptor saccharolyticus (strain ATCC 43494 / DSM 8903 / Tp8T 6331).